We begin with the raw amino-acid sequence, 518 residues long: MASISTPFPISLHPKTVRSKPLKFRVLTRPIKASGSETPDLTVATRTGSKDLPIRNIPGNYGLPIVGPIKDRWDYFYDQGAEEFFKSRIRKYNSTVYRVNMPPGAFIAENPQVVALLDGKSFPVLFDVDKVEKKDLFTGTYMPSTELTGGYRILSYLDPSEPKHEKLKNLLFFLLKSSRNRIFPEFQATYSELFDSLEKELSLKGKADFGGSSDGTAFNFLARAFYGTNPADTKLKADAPGLITKWVLFNLHPLLSIGLPRVIEEPLIHTFSLPPALVKSDYQRLYEFFLESAGEILVEADKLGISREEATHNLLFATCFNTWGGMKILFPNMVKRIGRAGHQVHNRLAEEIRSVIKSNGGELTMGAIEKMELTKSVVYECLRFEPPVTAQYGRAKKDLVIESHDAAFKVKAGEMLYGYQPLATRDPKIFDRADEFVPERFVGEEGEKLLRHVLWSNGPETETPTVGNKQCAGKDFVVLVARLFVIEIFRRYDSFDIEVGTSPLGSSVNFSSLRKASF.

Residues 1 to 33 constitute a chloroplast transit peptide; sequence MASISTPFPISLHPKTVRSKPLKFRVLTRPIKA. Residues Lys133, His164, and Lys168 each coordinate heme b. Positions 321 and 389 each coordinate (13S)-hydroperoxy-(9Z,11E)-octadecadienoate. The (13S)-hydroperoxy-(9Z,11E,15Z)-octadecatrienoate site is built by Asn321 and Thr389. The heme b site is built by Lys469 and Cys471.

Belongs to the cytochrome P450 family. Heme b serves as cofactor.

The protein localises to the plastid. Its subcellular location is the chloroplast. The protein resides in the plastoglobule. It carries out the reaction (13S)-hydroperoxy-(9Z,11E,15Z)-octadecatrienoate = (9Z,13S,15Z)-12,13-epoxyoctadeca-9,11,15-trienoate + H2O. The enzyme catalyses (13S)-hydroperoxy-(9Z,11E)-octadecadienoate = (9Z,13S)-12,13-epoxyoctadeca-9,11-dienoate + H2O. It participates in lipid metabolism; oxylipin biosynthesis. Functionally, cytochrome P450 enzyme involved in the biosynthesis of oxylipin jasmonates, important phytohormones acting as growth regulators and signaling molecules for plant defense. Functions as an allene oxide synthase that converts hydroperoxy fatty acids to unstable allene epoxides. Catalyzes the dehydration of 13-HPOTE ((13S)-hydroperoxy-(9Z,11E,15Z)-octadecatrienoate), as well as 13-HPODE ((13S)-hydroperoxy-(9Z,11E)-octadecadienoate). The sequence is that of Allene oxide synthase, chloroplastic (CYP74A) from Arabidopsis thaliana (Mouse-ear cress).